A 106-amino-acid polypeptide reads, in one-letter code: UPF0060 membrane protein R01043 (106 aa).

Helical transmembrane passes span 5 to 25 (AIYFLAALAEITGCFAFWSWL), 31 to 51 (ALWLIPGMASLALFAWLLTMV), 61 to 81 (AAYGGVYIVASLSWLWLAEGV), and 85 to 105 (HWDMTGAAVALAGSAIILAGP).

This sequence belongs to the UPF0060 family.

Its subcellular location is the cell inner membrane. In Rhizobium meliloti (strain 1021) (Ensifer meliloti), this protein is UPF0060 membrane protein R01043.